The following is a 211-amino-acid chain: ATP-dependent Clp protease proteolytic subunit (211 aa).

The active-site Nucleophile is the Ser114. The active site involves His139.

This sequence belongs to the peptidase S14 family. Fourteen ClpP subunits assemble into 2 heptameric rings which stack back to back to give a disk-like structure with a central cavity, resembling the structure of eukaryotic proteasomes.

It is found in the cytoplasm. It carries out the reaction Hydrolysis of proteins to small peptides in the presence of ATP and magnesium. alpha-casein is the usual test substrate. In the absence of ATP, only oligopeptides shorter than five residues are hydrolyzed (such as succinyl-Leu-Tyr-|-NHMec, and Leu-Tyr-Leu-|-Tyr-Trp, in which cleavage of the -Tyr-|-Leu- and -Tyr-|-Trp bonds also occurs).. Functionally, cleaves peptides in various proteins in a process that requires ATP hydrolysis. Has a chymotrypsin-like activity. Plays a major role in the degradation of misfolded proteins. In Pseudomonas fluorescens (strain Pf0-1), this protein is ATP-dependent Clp protease proteolytic subunit.